Consider the following 119-residue polypeptide: Large ribosomal subunit protein bL20 (119 aa).

Belongs to the bacterial ribosomal protein bL20 family.

Binds directly to 23S ribosomal RNA and is necessary for the in vitro assembly process of the 50S ribosomal subunit. It is not involved in the protein synthesizing functions of that subunit. In Stenotrophomonas maltophilia (strain R551-3), this protein is Large ribosomal subunit protein bL20.